Here is a 348-residue protein sequence, read N- to C-terminus: NADH-quinone oxidoreductase subunit H (348 aa).

8 helical membrane-spanning segments follow: residues 7–27, 82–102, 115–135, 161–181, 199–219, 251–271, 287–307, and 322–342; these read IWLL…VVLL, GVFL…WAVI, VGLL…IMGG, IGFV…TTIV, FLDW…ISAL, LFFL…TILF, VPGI…FAMV, and LGWK…ATFL.

Belongs to the complex I subunit 1 family. NDH-1 is composed of 14 different subunits. Subunits NuoA, H, J, K, L, M, N constitute the membrane sector of the complex.

The protein localises to the cell inner membrane. It catalyses the reaction a quinone + NADH + 5 H(+)(in) = a quinol + NAD(+) + 4 H(+)(out). NDH-1 shuttles electrons from NADH, via FMN and iron-sulfur (Fe-S) centers, to quinones in the respiratory chain. The immediate electron acceptor for the enzyme in this species is believed to be ubiquinone. Couples the redox reaction to proton translocation (for every two electrons transferred, four hydrogen ions are translocated across the cytoplasmic membrane), and thus conserves the redox energy in a proton gradient. This subunit may bind ubiquinone. This is NADH-quinone oxidoreductase subunit H from Bartonella quintana (strain Toulouse) (Rochalimaea quintana).